A 207-amino-acid polypeptide reads, in one-letter code: LexA repressor (207 aa).

A DNA-binding region (H-T-H motif) is located at residues 28–48 (VREIAVAVGLASSSTVHGHLE). Active-site for autocatalytic cleavage activity residues include serine 129 and lysine 167.

Belongs to the peptidase S24 family. In terms of assembly, homodimer.

It carries out the reaction Hydrolysis of Ala-|-Gly bond in repressor LexA.. Its function is as follows. Represses a number of genes involved in the response to DNA damage (SOS response), including recA and lexA. In the presence of single-stranded DNA, RecA interacts with LexA causing an autocatalytic cleavage which disrupts the DNA-binding part of LexA, leading to derepression of the SOS regulon and eventually DNA repair. The chain is LexA repressor from Oceanobacillus iheyensis (strain DSM 14371 / CIP 107618 / JCM 11309 / KCTC 3954 / HTE831).